A 247-amino-acid polypeptide reads, in one-letter code: TLC domain-containing protein 1 (247 aa).

Positions 1-27 (MPLLFHPAWPLLLGATLTFRALRRVLC) are cleaved as a signal peptide. Over 28 to 46 (RLPQPAHVQTDPLRTWRWH) the chain is Extracellular. The TLC domain occupies 40 to 234 (LRTWRWHNLL…LLRSDFCPER (195 aa)). A helical transmembrane segment spans residues 47–67 (NLLVSFTHSIVSGIWALLCLW). Over 68-83 (QTPEMLVEIETAWSAS) the chain is Cytoplasmic. A helical membrane pass occupies residues 84-104 (GYLLVCFSAGYFIHDTVDIVV). Over 105–123 (SKQTRASWEYLVHHVMAMG) the chain is Extracellular. Positions 124–144 (AFFSGIFWKRFVGGGVLTLLV) form an intramembrane region, helical. At 145–173 (EVSNIFLTLRMMMKINNAQDLLLYKVNKY) the chain is on the extracellular side. The helical transmembrane segment at 174–194 (INLVMYFLFRLAPQAYLTKFF) threads the bilayer. Topologically, residues 195–201 (LQYAGQR) are cytoplasmic. The chain crosses the membrane as a helical span at residues 202–222 (TLGTFLLAILLMLDLMIIIYF). The Extracellular segment spans residues 223-247 (SRLLRSDFCPERAPRRQQKDKFLTE).

It localises to the cell membrane. In terms of biological role, regulates the composition and fluidity of the plasma membrane. Inhibits the incorporation of membrane-fluidizing phospholipids containing omega-3 long-chain polyunsaturated fatty acids (LCPUFA) and thereby promotes membrane rigidity. Does not appear to have any effect on LCPUFA synthesis. This chain is TLC domain-containing protein 1 (Tlcd1), found in Mus musculus (Mouse).